Here is a 103-residue protein sequence, read N- to C-terminus: MSFKRFLQQIPVRICLLIIYLYQWLISPLLGSCCRFFPSCSHYAEQALKSHGFLMGCWLSIKRIGKCGPWHPGGIDMVPKTALQEVLEPYQEIDGGDSSHFSE.

This sequence belongs to the UPF0161 family.

The protein localises to the cell inner membrane. Its function is as follows. Could be involved in insertion of integral membrane proteins into the membrane. The chain is Putative membrane protein insertion efficiency factor from Chlamydia pneumoniae (Chlamydophila pneumoniae).